Reading from the N-terminus, the 126-residue chain is Profilin-1 (126 aa).

Belongs to the profilin family. In terms of assembly, occurs in many kinds of cells as a complex with monomeric actin in a 1:1 ratio.

The protein resides in the cytoplasm. It localises to the cytoskeleton. Its function is as follows. Binds to actin and affects the structure of the cytoskeleton. At high concentrations, profilin prevents the polymerization of actin, whereas it enhances it at low concentrations. By binding to PIP2, it inhibits the formation of IP3 and DG. In Dictyostelium discoideum (Social amoeba), this protein is Profilin-1 (proA).